Consider the following 687-residue polypeptide: Dictomallein (687 aa).

2 disordered regions span residues 1–45 and 73–112; these read MGNG…SRRL and TAGG…STSA. The region spanning 233-501 is the Peptidase M66 domain; that stretch reads PVFGTDADVQ…QAWIASRVLA (269 aa). Position 393 (His-393) interacts with Zn(2+). The active site involves Glu-394. Residues His-397 and His-403 each coordinate Zn(2+).

The protein belongs to the dictomallein family. Zn(2+) is required as a cofactor.

This Burkholderia pseudomallei (strain 1710b) protein is Dictomallein (dtmL).